Reading from the N-terminus, the 455-residue chain is SVGFKAGVKDYKLTYYTPDYETKDTDILAAFRVTPQPGVPPEEAGAAVAAESSTGTWTTVWTDGLTSLDRYKGRCYHIEPVAGEENQYIAYVAYPLDLFEEGSVTNMFTSIVGNVFGFKALRALRLEDLRIPTSYTKTFQGPPHGIQVERDKLNKYGRPLLGCTIKPKLGLSAKNYGRAVYECLRGGLDFTKDDENVNSQPFMRWRDRFLFCAEAIFKAQAETGEIKGHYLNATAGTCEEMMKRAVFARELGVPIVMHDYLTGGFTANTSLSHYCRDNGLLLHIHRAMHAVIDRQKNHGMHFRVLAKALRLSGGDHIHAGTVVGKLEGEREITLGFVDLLRDDFIEKDRSRGIYFTQDWVSLPGVLPVASGGIHVWHMPALTEIFGDDSVLQFGGGTLGHPWGNAPGAVANRVALEACVQARNEGRDLAREGNEIIREASKWSPELAAACEVWKE.

Residue Lys-5 is modified to N6,N6,N6-trimethyllysine. Asn-114 and Thr-164 together coordinate substrate. Residue Lys-166 is the Proton acceptor of the active site. Lys-168 contacts substrate. Residues Lys-192, Asp-194, and Glu-195 each coordinate Mg(2+). An N6-carboxylysine modification is found at Lys-192. Residue His-285 is the Proton acceptor of the active site. Arg-286, His-318, and Ser-370 together coordinate substrate.

Belongs to the RuBisCO large chain family. Type I subfamily. Heterohexadecamer of 8 large chains and 8 small chains; disulfide-linked. The disulfide link is formed within the large subunit homodimers. The cofactor is Mg(2+). The disulfide bond which can form in the large chain dimeric partners within the hexadecamer appears to be associated with oxidative stress and protein turnover.

It localises to the plastid. The protein resides in the chloroplast. The enzyme catalyses 2 (2R)-3-phosphoglycerate + 2 H(+) = D-ribulose 1,5-bisphosphate + CO2 + H2O. The catalysed reaction is D-ribulose 1,5-bisphosphate + O2 = 2-phosphoglycolate + (2R)-3-phosphoglycerate + 2 H(+). Its function is as follows. RuBisCO catalyzes two reactions: the carboxylation of D-ribulose 1,5-bisphosphate, the primary event in carbon dioxide fixation, as well as the oxidative fragmentation of the pentose substrate in the photorespiration process. Both reactions occur simultaneously and in competition at the same active site. The polypeptide is Ribulose bisphosphate carboxylase large chain (Senna didymobotrya (Popcorn cassia)).